The following is a 124-amino-acid chain: Seripauperin-19 (124 aa).

An N-terminal signal peptide occupies residues 1-20 (MVKLTSIAAGVAAIAAGVAA).

This sequence belongs to the SRP1/TIP1 family. Seripauperin subfamily.

This Saccharomyces cerevisiae (strain ATCC 204508 / S288c) (Baker's yeast) protein is Seripauperin-19 (PAU19).